The chain runs to 151 residues: uncharacterized protein (151 aa).

This is an uncharacterized protein from Homo sapiens (Human).